Reading from the N-terminus, the 95-residue chain is Small ribosomal subunit protein bS20 (95 aa).

Belongs to the bacterial ribosomal protein bS20 family.

Binds directly to 16S ribosomal RNA. In Fervidobacterium nodosum (strain ATCC 35602 / DSM 5306 / Rt17-B1), this protein is Small ribosomal subunit protein bS20.